The following is a 214-amino-acid chain: dITP/XTP pyrophosphatase (214 aa).

16–21 (THNPGK) provides a ligand contact to substrate. Mg(2+) is bound by residues Asp48 and Asp77. The active-site Proton acceptor is the Asp77. Substrate contacts are provided by residues Ser78, 163-166 (FGYD), Lys186, and 198-199 (HR).

It belongs to the HAM1 NTPase family. Homodimer. The cofactor is Mg(2+).

The catalysed reaction is XTP + H2O = XMP + diphosphate + H(+). The enzyme catalyses dITP + H2O = dIMP + diphosphate + H(+). It carries out the reaction ITP + H2O = IMP + diphosphate + H(+). In terms of biological role, pyrophosphatase that catalyzes the hydrolysis of nucleoside triphosphates to their monophosphate derivatives, with a high preference for the non-canonical purine nucleotides XTP (xanthosine triphosphate), dITP (deoxyinosine triphosphate) and ITP. Seems to function as a house-cleaning enzyme that removes non-canonical purine nucleotides from the nucleotide pool, thus preventing their incorporation into DNA/RNA and avoiding chromosomal lesions. The sequence is that of dITP/XTP pyrophosphatase from Bradyrhizobium sp. (strain BTAi1 / ATCC BAA-1182).